The chain runs to 382 residues: Kelch domain-containing protein 3 (382 aa).

Kelch repeat units lie at residues 25-77 (RVYS…PYMR), 88-138 (TVFL…VLGK), 139-189 (IMYI…TMLG), 191-249 (HMYV…GYNG), and 251-301 (LYIF…IVGD).

Component of a CRL2(KLHDC3) complex, also named ECS(KLHDC3) complex, composed of CUL2, Elongin BC (ELOB and ELOC), RBX1 and substrate-specific adapter KLHDC3. May form oligomers as a KLHDC3-ELOB-ELOC complex; this interaction is likely autoinhibitory for the E3 ligase complex.

Its subcellular location is the cytoplasm. It functions in the pathway protein modification; protein ubiquitination. Its function is as follows. Substrate-recognition component of a Cul2-RING (CRL2) E3 ubiquitin-protein ligase complex of the DesCEND (destruction via C-end degrons) pathway, which recognizes a C-degron located at the extreme C terminus of target proteins, leading to their ubiquitination and degradation. The C-degron recognized by the DesCEND pathway is usually a motif of less than ten residues and can be present in full-length proteins, truncated proteins or proteolytically cleaved forms. The CRL2(KLHDC3) complex specifically recognizes proteins with a glycine (Gly) at the C-terminus, leading to their ubiquitination and degradation: recognizes the C-terminal -Arg-(Xaa)n-Arg-Gly, -Arg-(Xaa)n-Lys-Gly, and -Arg-(Xaa)n-Gln-Gly degrons. The CRL2(KLHDC3) complex mediates ubiquitination and degradation of truncated SELENOV and SEPHS2 selenoproteins produced by failed UGA/Sec decoding, which end with a glycine. May be involved in meiotic recombination process. The protein is Kelch domain-containing protein 3 of Rattus norvegicus (Rat).